Consider the following 53-residue polypeptide: Rubredoxin (53 aa).

The region spanning Met1–Ala53 is the Rubredoxin-like domain. Residues Cys6, Cys9, Cys39, and Cys42 each coordinate Fe cation.

It belongs to the rubredoxin family. It depends on Fe(3+) as a cofactor.

In terms of biological role, rubredoxin is a small nonheme, iron protein lacking acid-labile sulfide. Its single Fe, chelated to 4 Cys, functions as an electron acceptor and may also stabilize the conformation of the molecule. The protein is Rubredoxin of Acetoanaerobium sticklandii (strain ATCC 12662 / DSM 519 / JCM 1433 / CCUG 9281 / NCIMB 10654 / HF) (Clostridium sticklandii).